A 676-amino-acid chain; its full sequence is Urocanate hydratase (676 aa).

Residues 126 to 127, Q204, 251 to 253, E271, 317 to 318, 343 to 347, 354 to 355, and Y403 each bind NAD(+); these read GG, GMS, NV, QTSCH, and YY. K534 carries the N6-succinyllysine modification. Residue G594 participates in NAD(+) binding.

The protein belongs to the urocanase family. It depends on NAD(+) as a cofactor.

It carries out the reaction 4-imidazolone-5-propanoate = trans-urocanate + H2O. It participates in amino-acid degradation; L-histidine degradation into L-glutamate; N-formimidoyl-L-glutamate from L-histidine: step 2/3. The sequence is that of Urocanate hydratase (Uroc1) from Mus musculus (Mouse).